A 215-amino-acid chain; its full sequence is 3-isopropylmalate dehydratase small subunit (215 aa).

The protein belongs to the LeuD family. LeuD type 1 subfamily. As to quaternary structure, heterodimer of LeuC and LeuD.

The enzyme catalyses (2R,3S)-3-isopropylmalate = (2S)-2-isopropylmalate. It functions in the pathway amino-acid biosynthesis; L-leucine biosynthesis; L-leucine from 3-methyl-2-oxobutanoate: step 2/4. In terms of biological role, catalyzes the isomerization between 2-isopropylmalate and 3-isopropylmalate, via the formation of 2-isopropylmaleate. The protein is 3-isopropylmalate dehydratase small subunit of Polynucleobacter necessarius subsp. necessarius (strain STIR1).